Consider the following 102-residue polypeptide: Small ribosomal subunit protein uS10 (102 aa).

The protein belongs to the universal ribosomal protein uS10 family. Part of the 30S ribosomal subunit.

Involved in the binding of tRNA to the ribosomes. The protein is Small ribosomal subunit protein uS10 of Finegoldia magna (strain ATCC 29328 / DSM 20472 / WAL 2508) (Peptostreptococcus magnus).